The primary structure comprises 183 residues: Large ribosomal subunit protein mL43 (183 aa).

Disordered regions lie at residues 120 to 144 (HTDN…TGCG) and 162 to 183 (PGAL…AQAE). Residues 122-139 (DNPSIQGQWTPSPTNGLP) are compositionally biased toward polar residues. Basic and acidic residues predominate over residues 162 to 172 (PGALDRERDRI).

This sequence belongs to the mitochondrion-specific ribosomal protein mL43 family. As to quaternary structure, component of the mitochondrial ribosome large subunit (39S) which comprises a 16S rRNA and about 50 distinct proteins. In terms of tissue distribution, ubiquitous with the highest levels in the liver, heart and kidneys. The skeletal muscle, brain and testis showed lower but detectable expression. Expression is coregulated with TWNK.

The protein resides in the mitochondrion. The polypeptide is Large ribosomal subunit protein mL43 (Mrpl43) (Mus musculus (Mouse)).